A 242-amino-acid polypeptide reads, in one-letter code: Type III pantothenate kinase (242 aa).

7-14 is a binding site for ATP; that stretch reads DLGNSRFK. Residues tyrosine 91 and 98-101 each bind substrate; that span reads GVDR. Catalysis depends on aspartate 100, which acts as the Proton acceptor. Residue threonine 121 coordinates ATP. Substrate is bound at residue threonine 171.

The protein belongs to the type III pantothenate kinase family. In terms of assembly, homodimer. NH4(+) serves as cofactor. K(+) is required as a cofactor.

The protein localises to the cytoplasm. It catalyses the reaction (R)-pantothenate + ATP = (R)-4'-phosphopantothenate + ADP + H(+). Its pathway is cofactor biosynthesis; coenzyme A biosynthesis; CoA from (R)-pantothenate: step 1/5. Its function is as follows. Catalyzes the phosphorylation of pantothenate (Pan), the first step in CoA biosynthesis. This is Type III pantothenate kinase from Xanthomonas oryzae pv. oryzae (strain MAFF 311018).